A 338-amino-acid chain; its full sequence is Uroporphyrinogen decarboxylase (338 aa).

Residues 21–25, aspartate 71, tyrosine 146, serine 201, and histidine 316 contribute to the substrate site; that span reads RQAGR.

The protein belongs to the uroporphyrinogen decarboxylase family. As to quaternary structure, homodimer.

It is found in the cytoplasm. It catalyses the reaction uroporphyrinogen III + 4 H(+) = coproporphyrinogen III + 4 CO2. It functions in the pathway porphyrin-containing compound metabolism; protoporphyrin-IX biosynthesis; coproporphyrinogen-III from 5-aminolevulinate: step 4/4. Its function is as follows. Catalyzes the decarboxylation of four acetate groups of uroporphyrinogen-III to yield coproporphyrinogen-III. This Rickettsia akari (strain Hartford) protein is Uroporphyrinogen decarboxylase.